We begin with the raw amino-acid sequence, 911 residues long: SH3 and PX domain-containing protein 2B (911 aa).

The PX domain occupies 5–129 (RSIVEVKVLD…QFFETRPEDL (125 aa)). Tyr25 is subject to Phosphotyrosine. SH3 domains lie at 152–211 (MVLE…GQDG) and 221–280 (EEEE…KNSG). Residues 275-366 (LKKNSGEPLP…GLNLPKPPIP (92 aa)) form a disordered region. A phosphoserine mark is found at Ser279 and Ser291. A compositionally biased stretch (pro residues) spans 282-292 (PLPPKPGPGSP). Basic and acidic residues predominate over residues 311 to 337 (GREKELLSSQRDGRFEGRPVPDGDAKQ). The span at 338 to 347 (RSPKMRQRPP) shows a compositional bias: basic residues. The SH3 3 domain occupies 368-427 (QVEEEYYTIAEFQTTIPDGISFQAGLKVEVIEKNLSGWWYIQIEDKEGWAPATFIDKYKK). Residues 458–834 (NTGSEATGPS…GPWGTGKIGE (377 aa)) are disordered. Basic and acidic residues-rich tracts occupy residues 486 to 499 (KDWKGSKDVLRKAS), 517 to 548 (EEKPSLPPRKESIIKSEGELLERERERQRTEQ), 571 to 586 (PARDSRRPEPKPDKSR), 598 to 609 (CGHKVLAKEVKK), and 618 to 628 (SKTDLPEEKPD). Phosphoserine is present on residues Ser499 and Ser528. Composition is skewed to pro residues over residues 643–653 (RPKPAPSPKTE) and 756–766 (VVPPRRPPPPK). A compositionally biased stretch (gly residues) spans 822–831 (GSLGPWGTGK). Ser843 carries the phosphoserine modification. The SH3 4 domain maps to 850 to 911 (LKDSLYVAVA…IPSNYLRKKP (62 aa)).

This sequence belongs to the SH3PXD2 family. Interacts with ADAM15. Interacts with NOXO1. Interacts (via SH3 domains) with NOXA1; the interaction is direct. Interacts with FASLG. Phosphorylated in SRC-transformed cells. In terms of tissue distribution, expressed in fibroblasts.

The protein localises to the cytoplasm. Its subcellular location is the cell projection. It localises to the podosome. Its function is as follows. Adapter protein involved in invadopodia and podosome formation and extracellular matrix degradation. Binds matrix metalloproteinases (ADAMs), NADPH oxidases (NOXs) and phosphoinositides. Acts as an organizer protein that allows NOX1- or NOX3-dependent reactive oxygen species (ROS) generation and ROS localization. Plays a role in mitotic clonal expansion during the immediate early stage of adipocyte differentiation. This chain is SH3 and PX domain-containing protein 2B (SH3PXD2B), found in Homo sapiens (Human).